A 179-amino-acid chain; its full sequence is MARFQEFYKEKVVPGLIEKFGYKSVMEVPRITKITLNMGLGEAIADKKVIENAVGDLTKIAGQKPVVTKARKAIAGFKIRQGYPIGAMVTLRGRAMYEFLDRFVTVALPRVRDFRGVSGRAFDGRGNYNIGVKEQIIFPEIDYDKIDALRGLNISITTTAKTDDEAKALLASFKFPFRN.

Belongs to the universal ribosomal protein uL5 family. As to quaternary structure, part of the 50S ribosomal subunit; part of the 5S rRNA/L5/L18/L25 subcomplex. Contacts the 5S rRNA and the P site tRNA. Forms a bridge to the 30S subunit in the 70S ribosome.

Functionally, this is one of the proteins that bind and probably mediate the attachment of the 5S RNA into the large ribosomal subunit, where it forms part of the central protuberance. In the 70S ribosome it contacts protein S13 of the 30S subunit (bridge B1b), connecting the 2 subunits; this bridge is implicated in subunit movement. Contacts the P site tRNA; the 5S rRNA and some of its associated proteins might help stabilize positioning of ribosome-bound tRNAs. In Burkholderia vietnamiensis (strain G4 / LMG 22486) (Burkholderia cepacia (strain R1808)), this protein is Large ribosomal subunit protein uL5.